The primary structure comprises 301 residues: Probable alpha-L-glutamate ligase 1 (301 aa).

The ATP-grasp domain maps to 104 to 287; that stretch reads LQLLSRKGIG…VTEPIVEYIE (184 aa). Residues Lys-141, 178–179, Asp-187, and 211–213 contribute to the ATP site; these read EY and RSN. Asp-248, Glu-260, and Asn-262 together coordinate Mg(2+). Residues Asp-248, Glu-260, and Asn-262 each contribute to the Mn(2+) site.

It belongs to the RimK family. Requires Mg(2+) as cofactor. Mn(2+) is required as a cofactor.

The chain is Probable alpha-L-glutamate ligase 1 from Shewanella sp. (strain MR-4).